Reading from the N-terminus, the 352-residue chain is MTSSLLLAFLLLAPTTVATPRAGGQCPACGGPTLELESQRELLLDLAKRSILDKLHLTQRPTLNRPVSRAALRTALQHLHGVPQGALLEDNREQECEIISFAETGLSTINQTRLDFHFSSDRTAGDREVQQASLMFFVQLPSNTTWTLKVRVLVLGPHNTNLTLATQYLLEVDASGWHQLPLGPEAQAACSQGHLTLELVLEGQVAQSSVILGGAAHRPFVAARVRVGGKHQIHRRGIDCQGGSRMCCRQEFFVDFREIGWHDWIIQPEGYAMNFCIGQCPLHIAGMPGIAASFHTAVLNLLKANTAAGTTGGGSCCVPTARRPLSLLYYDRDSNIVKTDIPDMVVEACGCS.

Positions 1–18 (MTSSLLLAFLLLAPTTVA) are cleaved as a signal peptide. Residues 19 to 236 (TPRAGGQCPA…VGGKHQIHRR (218 aa)) constitute a propeptide that is removed on maturation. N-linked (GlcNAc...) asparagine glycosylation is found at N110, N143, and N161. Intrachain disulfides connect C240/C248, C247/C317, C276/C349, and C280/C351.

This sequence belongs to the TGF-beta family. In terms of assembly, homodimeric or heterodimeric through association with alpha and beta subunits, linked by one or more disulfide bonds. Inhibins are heterodimers of one alpha and one beta subunit. Activins are homo- or heterodimers of beta subunits only. Expressed in benign prostatic hyperplasia.

It localises to the secreted. Its function is as follows. Inhibins and activins inhibit and activate, respectively, the secretion of follitropin by the pituitary gland. Inhibins/activins are involved in regulating a number of diverse functions such as hypothalamic and pituitary hormone secretion, gonadal hormone secretion, germ cell development and maturation, erythroid differentiation, insulin secretion, nerve cell survival, embryonic axial development or bone growth, depending on their subunit composition. Inhibins appear to oppose the functions of activins. This is Inhibin beta C chain (INHBC) from Homo sapiens (Human).